The sequence spans 137 residues: Small ribosomal subunit protein uS9c (137 aa).

The protein belongs to the universal ribosomal protein uS9 family.

Its subcellular location is the plastid. The protein resides in the chloroplast. The protein is Small ribosomal subunit protein uS9c (rps9) of Chlorella vulgaris (Green alga).